The primary structure comprises 317 residues: Melanocyte-stimulating hormone receptor (317 aa).

The Extracellular segment spans residues 1-37; that stretch reads MPVQGSQRRLLGSLNSTPTATPHLGLAANQTGARCRE. A glycan (N-linked (GlcNAc...) asparagine) is linked at N29. Residues 38-63 form a helical membrane-spanning segment; it reads VSIPDGLFLSLGLVSLVENVLVVTAI. Topologically, residues 64–72 are cytoplasmic; that stretch reads AKNRNLHSP. The chain crosses the membrane as a helical span at residues 73 to 93; it reads MYCFICCLALSDLLVSGSNML. Residues 94–118 lie on the Extracellular side of the membrane; that stretch reads ETAVTLLLEAGALVARAAVVQQLDN. A helical transmembrane segment spans residues 119-140; it reads VIDVITCSSMLSSLCFLGAIAV. At 141-163 the chain is on the cytoplasmic side; the sequence is DRYISIFYALRYHSIVTLPRAQR. The helical transmembrane segment at 164 to 183 threads the bilayer; that stretch reads AIAAIWVASVLCSTLFIAYY. At 184 to 191 the chain is on the extracellular side; it reads DHAAVLLC. Residues 192 to 211 traverse the membrane as a helical segment; the sequence is LVVFFLAMLVLMAVLYVHML. At 212–240 the chain is on the cytoplasmic side; sequence ARACQHAQGIARLHKRQRLAHQGFGLKGA. A helical membrane pass occupies residues 241–266; the sequence is ATLTILLGIFFLCWGPFFLHLTLIVL. At 267-279 the chain is on the extracellular side; sequence CPQHPTCSCIFKN. A helical transmembrane segment spans residues 280 to 300; that stretch reads FNLFLALIICNAIIDPLIYAF. Residues 301-317 are Cytoplasmic-facing; sequence RSQELRRTLKEVLLCSW. A lipid anchor (S-palmitoyl cysteine) is attached at C315.

Belongs to the G-protein coupled receptor 1 family. Interacts with MGRN1, but does not undergo MGRN1-mediated ubiquitination; this interaction competes with GNAS-binding and thus inhibits agonist-induced cAMP production. Interacts with OPN3; the interaction results in a decrease in MC1R-mediated cAMP signaling and ultimately a decrease in melanin production in melanocytes. In terms of tissue distribution, expressed in the adrenal gland.

The protein resides in the cell membrane. Receptor for MSH (alpha, beta and gamma) and ACTH. The activity of this receptor is mediated by G proteins which activate adenylate cyclase. Mediates melanogenesis, the production of eumelanin (black/brown) and phaeomelanin (red/yellow), via regulation of cAMP signaling in melanocytes. In Macaca mulatta (Rhesus macaque), this protein is Melanocyte-stimulating hormone receptor (MC1R).